The sequence spans 232 residues: Large ribosomal subunit protein uL1 (232 aa).

The protein belongs to the universal ribosomal protein uL1 family. Part of the 50S ribosomal subunit.

In terms of biological role, binds directly to 23S rRNA. The L1 stalk is quite mobile in the ribosome, and is involved in E site tRNA release. Its function is as follows. Protein L1 is also a translational repressor protein, it controls the translation of the L11 operon by binding to its mRNA. This chain is Large ribosomal subunit protein uL1, found in Clostridium novyi (strain NT).